A 258-amino-acid polypeptide reads, in one-letter code: Neurotrophin-3 (258 aa).

The signal sequence occupies residues 1–18; it reads MSILFYVIFLAYLRGIQG. The propeptide occupies 19 to 139; it reads NSMDQRSLPE…ANRTSPRRKR (121 aa). Positions 60–85 are disordered; the sequence is QSTLPKAEAPREPEQGEATRSEFQPM. Basic and acidic residues predominate over residues 67 to 79; that stretch reads EAPREPEQGEATR. A glycan (N-linked (GlcNAc...) asparagine) is linked at asparagine 131. 3 disulfide bridges follow: cysteine 153–cysteine 218, cysteine 196–cysteine 247, and cysteine 206–cysteine 249.

The protein belongs to the NGF-beta family. In terms of tissue distribution, brain and peripheral tissues.

The protein resides in the secreted. Its function is as follows. Seems to promote the survival of visceral and proprioceptive sensory neurons. This is Neurotrophin-3 (Ntf3) from Mus musculus (Mouse).